The sequence spans 330 residues: Serpentine receptor class J-38 (330 aa).

The next 7 helical transmembrane spans lie at 6-26, 43-63, 98-118, 135-155, 200-220, 253-273, and 285-305; these read IYIF…PIFV, LLLF…VVPI, LVAS…LVIY, LLLS…LGYA, TIIW…LALL, IPIV…IFGI, and GALG…LPIF.

It belongs to the nematode receptor-like protein srj family.

Its subcellular location is the membrane. In Caenorhabditis elegans, this protein is Serpentine receptor class J-38 (srj-38).